The sequence spans 148 residues: Cytochrome c-type biogenesis protein CcmE (148 aa).

Over 1 to 7 (MTRKQRR) the chain is Cytoplasmic. Residues 8-28 (LYFVLLGMAALGGAVALVLTA) traverse the membrane as a helical; Signal-anchor for type II membrane protein segment. Over 29–148 (ISDSLVYFYS…QWNDGKQPKQ (120 aa)) the chain is Periplasmic. Heme contacts are provided by His121 and Tyr125.

Belongs to the CcmE/CycJ family.

It is found in the cell inner membrane. Functionally, heme chaperone required for the biogenesis of c-type cytochromes. Transiently binds heme delivered by CcmC and transfers the heme to apo-cytochromes in a process facilitated by CcmF and CcmH. The sequence is that of Cytochrome c-type biogenesis protein CcmE from Paramagnetospirillum magneticum (strain ATCC 700264 / AMB-1) (Magnetospirillum magneticum).